The following is a 916-amino-acid chain: Translation initiation factor IF-2 (916 aa).

The disordered stretch occupies residues 50 to 326; that stretch reads NRDKESTSQP…NSTLQQGFNK (277 aa). A compositionally biased stretch (basic and acidic residues) spans 109 to 241; that stretch reads AQREAEEKAR…LAEENAEKWT (133 aa). Residues 277 to 291 show a composition bias toward basic residues; that stretch reads GRGRAAKAPRPKKNN. Residues 292–304 show a composition bias toward basic and acidic residues; that stretch reads RHSEKADREEARA. In terms of domain architecture, tr-type G spans 415-584; it reads SRAPVVTIMG…LLQAEVLELK (170 aa). Residues 424-431 form a G1 region; the sequence is GHVDHGKT. 424–431 serves as a coordination point for GTP; sequence GHVDHGKT. Residues 449-453 form a G2 region; it reads GITQH. Residues 470 to 473 are G3; the sequence is DTPG. GTP is bound by residues 470 to 474 and 524 to 527; these read DTPGH and NKID. A G4 region spans residues 524 to 527; the sequence is NKID. The interval 560–562 is G5; sequence SAK.

This sequence belongs to the TRAFAC class translation factor GTPase superfamily. Classic translation factor GTPase family. IF-2 subfamily.

Its subcellular location is the cytoplasm. Functionally, one of the essential components for the initiation of protein synthesis. Protects formylmethionyl-tRNA from spontaneous hydrolysis and promotes its binding to the 30S ribosomal subunits. Also involved in the hydrolysis of GTP during the formation of the 70S ribosomal complex. The chain is Translation initiation factor IF-2 from Proteus mirabilis (strain HI4320).